Here is a 207-residue protein sequence, read N- to C-terminus: Ribosomal RNA small subunit methyltransferase G (207 aa).

Residues Gly-75, Phe-80, 126-127 (LE), and Arg-140 each bind S-adenosyl-L-methionine.

It belongs to the methyltransferase superfamily. RNA methyltransferase RsmG family.

It is found in the cytoplasm. It carries out the reaction guanosine(527) in 16S rRNA + S-adenosyl-L-methionine = N(7)-methylguanosine(527) in 16S rRNA + S-adenosyl-L-homocysteine. Its function is as follows. Specifically methylates the N7 position of guanine in position 527 of 16S rRNA. The polypeptide is Ribosomal RNA small subunit methyltransferase G (Erythrobacter litoralis (strain HTCC2594)).